The chain runs to 206 residues: Undecaprenyl-diphosphatase (206 aa).

Transmembrane regions (helical) follow at residues 5–25 (YYWI…LIGG), 53–73 (FLSK…LLIF), 79–99 (IGIT…VSKY), 138–158 (VTLL…EAVL), and 164–184 (VYVG…GSWI).

Its subcellular location is the cell membrane. It catalyses the reaction di-trans,octa-cis-undecaprenyl diphosphate + H2O = di-trans,octa-cis-undecaprenyl phosphate + phosphate + H(+). The protein is Undecaprenyl-diphosphatase (sepP) of Sulfolobus acidocaldarius (strain ATCC 33909 / DSM 639 / JCM 8929 / NBRC 15157 / NCIMB 11770).